Here is a 199-residue protein sequence, read N- to C-terminus: Recombination protein RecR (199 aa).

A C4-type zinc finger spans residues 57–72 (CSICGNITEDDPCDIC). The 97-residue stretch at 80–176 (KAVLVVEDSK…KVTRLAHGLS (97 aa)) folds into the Toprim domain.

This sequence belongs to the RecR family.

Its function is as follows. May play a role in DNA repair. It seems to be involved in an RecBC-independent recombinational process of DNA repair. It may act with RecF and RecO. This is Recombination protein RecR from Pediococcus pentosaceus (strain ATCC 25745 / CCUG 21536 / LMG 10740 / 183-1w).